A 274-amino-acid chain; its full sequence is 4-diphosphocytidyl-2-C-methyl-D-erythritol kinase (274 aa).

Residue K8 is part of the active site. 94-104 (PSGAGLGGGSS) is a binding site for ATP. The active site involves D136.

This sequence belongs to the GHMP kinase family. IspE subfamily.

It catalyses the reaction 4-CDP-2-C-methyl-D-erythritol + ATP = 4-CDP-2-C-methyl-D-erythritol 2-phosphate + ADP + H(+). Its pathway is isoprenoid biosynthesis; isopentenyl diphosphate biosynthesis via DXP pathway; isopentenyl diphosphate from 1-deoxy-D-xylulose 5-phosphate: step 3/6. In terms of biological role, catalyzes the phosphorylation of the position 2 hydroxy group of 4-diphosphocytidyl-2C-methyl-D-erythritol. The protein is 4-diphosphocytidyl-2-C-methyl-D-erythritol kinase of Bacteroides thetaiotaomicron (strain ATCC 29148 / DSM 2079 / JCM 5827 / CCUG 10774 / NCTC 10582 / VPI-5482 / E50).